The sequence spans 776 residues: Zinc finger CCCH-type antiviral protein 1 (776 aa).

N-acetylalanine is present on alanine 2. An N-terminal domain region spans residues 2–254 (ADPGVCCFIT…DRSKSRDRFL (253 aa)). Residues 69–76 (RARVCRRK) carry the Nuclear localization signal motif. 4 C3H1-type zinc fingers span residues 73-86 (CRRKYCQRPCDSLH), 88-110 (CKLNLLGRCHYAQSQRNLCKYSH), 150-172 (CKSYKGEGRKQTCGQPQPCERLH), and 169-193 (ERLHICEHFTRGNCSYLNCLRSHNL). Positions 221-249 (NKHARRNPPGTRAAHPHRRGGAHRDRSKS) are disordered. Positions 224-254 (ARRNPPGTRAAHPHRRGGAHRDRSKSRDRFL) are binding to EXOSC5. A phosphoserine; by GSK3-beta mark is found at serine 257, serine 262, serine 266, and serine 270. Serine 274 bears the Phosphoserine mark. Residue threonine 278 is modified to Phosphothreonine. Phosphoserine is present on serine 283. The short motif at 284 to 291 (LEDVSVDV) is the Nuclear export signal element. Residues 308 to 355 (PVSSKAAGVQGPSQMRASQEFSEDGNLDDIFSRNRSDSSSSRASAAKV) form a disordered region. Residues 318-327 (GPSQMRASQE) show a composition bias toward polar residues. Serine 325, serine 351, and serine 398 each carry phosphoserine. Over residues 344 to 353 (DSSSSRASAA) the composition is skewed to low complexity. The short motif at 405 to 406 (KK) is the Nuclear localization signal element. The segment at 457 to 483 (WASASTHNAPNGSSQIMDETPNVSKSS) is disordered. Positions 459 to 483 (SASTHNAPNGSSQIMDETPNVSKSS) are enriched in polar residues. Tyrosine 501 bears the Phosphotyrosine mark. A disordered region spans residues 512-562 (LAVPGEATTPVQSNRLPQSPLSSSSHRAAASGSPGKNSTHTSVSPAIESSR). The span at 523-546 (QSNRLPQSPLSSSSHRAAASGSPG) shows a compositional bias: low complexity. Phosphoserine occurs at positions 544 and 667. The WWE domain maps to 671–758 (YEEKPLSAVF…ASKTQRHVVR (88 aa)).

Belongs to the ARTD/PARP family. Homodimer or homooligomer. Homooligomerization is essential for its antiviral activity. Interacts with EXOSC5. Interacts with EXOSC3, EXOSC7, DCP2 and DCP1A. Interacts with PARN in an RNA-independent manner. Interacts with XRN1 in an RNA-dependent manner. Interacts (via N-terminal domain) with DHX30 (via N-terminus) in an RNA-independent manner. Interacts (via N-terminal domain) with DDX17 in an RNA-independent manner. Phosphorylation at Ser-274 is essential for sequential phosphorylation of Ser-270, Ser-266, Ser-262 and Ser-257 by GSK3-beta. Phosphorylation by GSK3-beta enhances its antiviral activity. As to expression, expressed in the kidney and liver.

The protein localises to the cytoplasm. The protein resides in the nucleus. Its function is as follows. Antiviral protein which inhibits the replication of viruses by recruiting the cellular RNA degradation machineries to degrade the viral mRNAs. Binds to a ZAP-responsive element (ZRE) present in the target viral mRNA, recruits cellular poly(A)-specific ribonuclease PARN to remove the poly(A) tail, and the 3'-5' exoribonuclease complex exosome to degrade the RNA body from the 3'-end. It also recruits the decapping complex DCP1-DCP2 through RNA helicase p72 (DDX17) to remove the cap structure of the viral mRNA to initiate its degradation from the 5'-end. Its target viruses belong to families which include retroviridae: human immunodeficiency virus type 1 (HIV-1) and moloney and murine leukemia virus (MoMLV), filoviridae: ebola virus (EBOV) and marburg virus (MARV), togaviridae: sindbis virus (SINV) and Ross river virus (RRV). Specifically targets the multiply spliced but not unspliced or singly spliced HIV-1 mRNAs for degradation. The polypeptide is Zinc finger CCCH-type antiviral protein 1 (Zc3hav1) (Rattus norvegicus (Rat)).